The primary structure comprises 403 residues: Aloesone synthase (403 aa).

Cys174 is a catalytic residue. CoA-binding positions include Ser281 and 318–321; that span reads GGRA.

It belongs to the thiolase-like superfamily. Chalcone/stilbene synthases family. Homodimer.

Its pathway is secondary metabolite biosynthesis; flavonoid biosynthesis. Its function is as follows. Catalyzes the iterative condensations of 6, 7 or 8 molecules of malonyl-CoA to produce various aromatic polyketides. Produces the heptaketide aloesone, the aglycone of aloesin, from 7 molecules of malonyl-CoA as a major product. Also able to produce a hexaketide pyrone, a heptaketide 6-(2-acetyl-3,5-dihydroxybenzyl)-4-hydroxy-2-pyrone, a novel heptaketide 6-(2-(2,4-dihydroxy-6-methylphenyl)-2-oxoethyl)-4-hydroxy-2-pyrone and octaketides SEK4/SEK4b. The protein is Aloesone synthase (PKS3) of Aloe arborescens (Kidachi aloe).